The chain runs to 626 residues: Miltiradiene synthase KSL1, chloroplastic (626 aa).

The transit peptide at 1-51 directs the protein to the chloroplast; the sequence is MSLAFNLRVIPFSGHTIQSRRGLFPVHESPMITTKPFAAVKCSLTTSTDLM. Mg(2+) contacts are provided by Asp329, Asp333, Asn473, and Glu481. The short motif at 329 to 333 is the DDXXD motif element; the sequence is DDFFD.

It belongs to the terpene synthase family. Requires Mg(2+) as cofactor. In terms of tissue distribution, highly expressed in roots, and, at low levels, in stems and leaves.

It localises to the plastid. The protein resides in the chloroplast. It catalyses the reaction (+)-copalyl diphosphate = miltiradiene + diphosphate. Its pathway is secondary metabolite biosynthesis; terpenoid biosynthesis. In terms of biological role, involved in the biosynthesis of ent-kaurene diterpenoids natural products such as oridonin, miltiradiene, eriocalyxin B and nezukol, known to exhibit antitumor, anti-inflammatory and antibacterial activities. Catalyzes the conversion of (+)-copalyl diphosphate ((+)-CPP) to miltiradiene. The protein is Miltiradiene synthase KSL1, chloroplastic of Isodon rubescens (Rabdosia rubescens).